We begin with the raw amino-acid sequence, 192 residues long: Cytidylate kinase (192 aa).

12–20 (GLAGSGTTT) is a binding site for ATP.

This sequence belongs to the cytidylate kinase family. Type 2 subfamily.

Its subcellular location is the cytoplasm. The enzyme catalyses CMP + ATP = CDP + ADP. It catalyses the reaction dCMP + ATP = dCDP + ADP. The chain is Cytidylate kinase from Pyrococcus furiosus (strain ATCC 43587 / DSM 3638 / JCM 8422 / Vc1).